We begin with the raw amino-acid sequence, 766 residues long: Protein translocase subunit SecA 2 (766 aa).

Residues Gln84, 102–106, and Asp490 contribute to the ATP site; that span reads GEGKT.

Belongs to the SecA family. Monomer and homodimer. Part of the essential Sec protein translocation apparatus which comprises SecA, SecYEG and auxiliary proteins SecDF. Other proteins may also be involved.

It is found in the cell membrane. Its subcellular location is the cytoplasm. The catalysed reaction is ATP + H2O + cellular proteinSide 1 = ADP + phosphate + cellular proteinSide 2.. Functionally, part of the Sec protein translocase complex. Interacts with the SecYEG preprotein conducting channel. Has a central role in coupling the hydrolysis of ATP to the transfer of proteins into and across the cell membrane, serving as an ATP-driven molecular motor driving the stepwise translocation of polypeptide chains across the membrane. The chain is Protein translocase subunit SecA 2 from Thermobifida fusca (strain YX).